The chain runs to 215 residues: MPVEVKICGITDEDAMDVAIEEGADYVGLVFFPPSPRNVTPDRAAELVEFAPGDVTKVGLFVDPDDATLDTVLTRVRLDLLQLHGHETPERVEAIRLEYGLPVMKVLSVSDAADLDAAEPYLAVADRLLFDAKPPKGAVLPGGNAVSFDWSILTGRKWGLPWMLAGGLTPANVAEAVRISGAAAVDVSSGVESAPGIKDSDKIRAFIKAARGGRP.

It belongs to the TrpF family.

It carries out the reaction N-(5-phospho-beta-D-ribosyl)anthranilate = 1-(2-carboxyphenylamino)-1-deoxy-D-ribulose 5-phosphate. Its pathway is amino-acid biosynthesis; L-tryptophan biosynthesis; L-tryptophan from chorismate: step 3/5. The protein is N-(5'-phosphoribosyl)anthranilate isomerase of Paramagnetospirillum magneticum (strain ATCC 700264 / AMB-1) (Magnetospirillum magneticum).